The primary structure comprises 415 residues: MGDKAGTRVFKKSSPNCKVTVYLGKRDFVDHLDQVDPVDGVILVDPEYLKDRKVFVTLTCAFRYGREDLDVLGLSFRKDLYISTFQAFPPIAEERKANSRLQERLLKKLGQQAHPFYFTIPQNLPCSVTLQPGPEDTGKACGVDFEIRAFCAKSIEEKIHKRNSVRLVIRKVQYAPEKPGPQPMVETTRSFLMSDRSLHLEASLDKELYYHGEPISVNVHVTNNSTKTVKRLKISVRQYADICLFSTAQYKCPVAQVEADDQVSSSSTFCKVYTLTPTLDKNREKRGLALDGKLKHEDTNLASSTIVKDVTNKEVLGILVSYRVKVKLVISRGGLLSGVLERDVSVELPFVLMHPKPTELPISRPQSAVPDSDPPIDTNLIEFETNSFSQDDDFVFEDFARLRLKGMADDKDDDC.

This sequence belongs to the arrestin family.

The protein resides in the cytoplasm. The polypeptide is Arrestin red cell isoform 3 (Oncorhynchus mykiss (Rainbow trout)).